The sequence spans 420 residues: UDP-N-acetyl-D-mannosamine dehydrogenase (420 aa).

NAD(+) contacts are provided by tyrosine 13, isoleucine 14, aspartate 33, threonine 85, and threonine 126. UDP-N-acetyl-alpha-D-mannosaminouronate contacts are provided by arginine 160, valine 161, lysine 212, asparagine 216, arginine 219, histidine 250, arginine 252, and glycine 263. The Proton donor/acceptor role is filled by lysine 212. Residue cysteine 266 is the Nucleophile of the active site. Phenylalanine 330 and lysine 331 together coordinate UDP-N-acetyl-alpha-D-mannosaminouronate. Position 338 (arginine 338) interacts with NAD(+). Lysine 416 provides a ligand contact to UDP-N-acetyl-alpha-D-mannosaminouronate.

This sequence belongs to the UDP-glucose/GDP-mannose dehydrogenase family. WecC subfamily. Homodimer.

The enzyme catalyses UDP-N-acetyl-alpha-D-mannosamine + 2 NAD(+) + H2O = UDP-N-acetyl-alpha-D-mannosaminouronate + 2 NADH + 3 H(+). The protein operates within bacterial outer membrane biogenesis; enterobacterial common antigen biosynthesis. Its function is as follows. Catalyzes the four-electron oxidation of UDP-N-acetyl-D-mannosamine (UDP-ManNAc), reducing NAD(+) and releasing UDP-N-acetylmannosaminuronic acid (UDP-ManNAcA). The protein is UDP-N-acetyl-D-mannosamine dehydrogenase of Salmonella typhimurium (strain LT2 / SGSC1412 / ATCC 700720).